A 381-amino-acid chain; its full sequence is Opsin-1 (381 aa).

Over M1 to W53 the chain is Extracellular. The N-linked (GlcNAc...) asparagine glycan is linked to N24. The chain crosses the membrane as a helical span at residues H54–I78. Residues F79–N90 are Cytoplasmic-facing. The helical transmembrane segment at L91–C115 threads the bilayer. Over Y116–Y130 the chain is Extracellular. A disulfide bridge links C127 with C204. A helical transmembrane segment spans residues A131–L150. The Cytoplasmic portion of the chain corresponds to D151 to T169. The chain crosses the membrane as a helical span at residues A170–N193. The Extracellular segment spans residues R194–S217. N200 carries N-linked (GlcNAc...) asparagine glycosylation. The helical transmembrane segment at Y218–V245 threads the bilayer. At S246–K280 the chain is on the cytoplasmic side. A helical transmembrane segment spans residues V281–I304. Residues F305–S311 are Extracellular-facing. Residues P312–S336 form a helical membrane-spanning segment. Residue K323 is modified to N6-(retinylidene)lysine. Residues H337–A381 lie on the Cytoplasmic side of the membrane. Polar residues predominate over residues A354–V370. Residues A354 to A381 are disordered. The segment covering S371–A381 has biased composition (basic and acidic residues).

Belongs to the G-protein coupled receptor 1 family. Opsin subfamily. Post-translationally, phosphorylated on some or all of the serine and threonine residues present in the C-terminal region.

It is found in the cell projection. It localises to the rhabdomere membrane. In terms of biological role, visual pigments are the light-absorbing molecules that mediate vision. They consist of an apoprotein, opsin, covalently linked to cis-retinal. The polypeptide is Opsin-1 (Lo1) (Schistocerca gregaria (Desert locust)).